A 761-amino-acid polypeptide reads, in one-letter code: uncharacterized protein (761 aa).

Methionine 1 is subject to N-acetylmethionine. Disordered regions lie at residues methionine 1–serine 82, serine 229–alanine 320, and phenylalanine 590–glutamine 640. A compositionally biased stretch (polar residues) spans asparagine 13 to leucine 27. The span at proline 28–threonine 45 shows a compositional bias: low complexity. Polar residues-rich tracts occupy residues threonine 244 to glutamate 259, asparagine 266 to histidine 276, phenylalanine 590 to aspartate 604, and serine 627 to glutamine 640.

Post-translationally, phosphorylated by CDC28.

This is an uncharacterized protein from Saccharomyces cerevisiae (strain ATCC 204508 / S288c) (Baker's yeast).